The primary structure comprises 297 residues: Nucleotide-binding protein Bsph_0448 (297 aa).

Residue 19 to 26 (GMSGAGKT) coordinates ATP. 70–73 (DMRG) provides a ligand contact to GTP.

This sequence belongs to the RapZ-like family.

Functionally, displays ATPase and GTPase activities. The protein is Nucleotide-binding protein Bsph_0448 of Lysinibacillus sphaericus (strain C3-41).